A 120-amino-acid chain; its full sequence is PE family protein PE10 (120 aa).

The tract at residues 29–59 is disordered; sequence GQVTGNGGSGNSGTSAAAANPNSDNTASIAD. The segment covering 40–51 has biased composition (low complexity); it reads SGTSAAAANPNS.

The protein belongs to the mycobacterial PE family. In terms of assembly, forms a complex with PE9. The complex interacts with human TLR4.

Its subcellular location is the secreted. The protein resides in the cell wall. In terms of biological role, together with PE9, induces macrophage apoptosis through human Toll-like receptor 4 (TLR4) signaling pathway. Interaction with TLR4 leads to increased levels of phospho-IRF-3, increase in the transcript levels of IFN-beta and pro-apoptotic genes, up-regulation of IL-10, down-regulation of IL-1b and enhanced levels of macrophage apoptosis. This Mycobacterium tuberculosis (strain ATCC 25618 / H37Rv) protein is PE family protein PE10.